The chain runs to 353 residues: Glutamate 5-kinase (353 aa).

Lysine 8 is a binding site for ATP. Positions 47, 134, and 146 each coordinate substrate. An ATP-binding site is contributed by 198-204 (TGGIRSK). Residues 262–339 (AGKIYVNKGA…SDLKKILGYE (78 aa)) enclose the PUA domain.

This sequence belongs to the glutamate 5-kinase family.

Its subcellular location is the cytoplasm. The catalysed reaction is L-glutamate + ATP = L-glutamyl 5-phosphate + ADP. It functions in the pathway amino-acid biosynthesis; L-proline biosynthesis; L-glutamate 5-semialdehyde from L-glutamate: step 1/2. Catalyzes the transfer of a phosphate group to glutamate to form L-glutamate 5-phosphate. The protein is Glutamate 5-kinase of Thermotoga maritima (strain ATCC 43589 / DSM 3109 / JCM 10099 / NBRC 100826 / MSB8).